The sequence spans 768 residues: Degenerin mec-4 (768 aa).

The Cytoplasmic portion of the chain corresponds to 1-109; that stretch reads MSWMQNLKNY…GEAPNVYYRA (109 aa). A helical membrane pass occupies residues 110–130; sequence VWVMLFLGCMIMLYLNAQSVL. Topologically, residues 131–718 are extracellular; the sequence is DKYNRNEKIV…VNLLADFGGQ (588 aa). 2 disordered regions span residues 187 to 221 and 237 to 260; these read AGGNKEHDGEKEVITEAPTTPAPTTKPSRRRGKRD and GSQGSSEQEDKDDEKEEEMHETTT. Over residues 189-200 the composition is skewed to basic and acidic residues; that stretch reads GNKEHDGEKEVI. Low complexity predominate over residues 203-212; that stretch reads APTTPAPTTK. The segment covering 243–252 has biased composition (acidic residues); the sequence is EQEDKDDEKE. Residues Asn-336, Asn-357, Asn-480, Asn-484, Asn-503, and Asn-671 are each glycosylated (N-linked (GlcNAc...) asparagine). The helical transmembrane segment at 719 to 739 threads the bilayer; the sequence is LGLWCGISFLTCCEFVFLFLE. Residues 740–768 lie on the Cytoplasmic side of the membrane; the sequence is TAYMSAEHNYSLYKKKKAEKAKKVASGSF.

Belongs to the amiloride-sensitive sodium channel (TC 1.A.6) family. The channel is probably composed of at least the mec-2, mec-4, mec-6 and mec-10 subunits.

It localises to the membrane. Probable sodium channel subunit. May be needed for mechanosensory transduction (touch sensitivity). Negatively regulates the turning step of male mating behavior. This is Degenerin mec-4 (mec-4) from Caenorhabditis briggsae.